The chain runs to 203 residues: Recombination protein RecR (203 aa).

Residues 58-73 (CDYCGNLDIVSICNIC) form a C4-type zinc finger. One can recognise a Toprim domain in the interval 81–177 (STIAVVESVA…KISKLASGIP (97 aa)).

This sequence belongs to the RecR family.

Functionally, may play a role in DNA repair. It seems to be involved in an RecBC-independent recombinational process of DNA repair. It may act with RecF and RecO. In Orientia tsutsugamushi (strain Ikeda) (Rickettsia tsutsugamushi), this protein is Recombination protein RecR.